The following is a 386-amino-acid chain: Lipid-A-disaccharide synthase (386 aa).

This sequence belongs to the LpxB family.

The catalysed reaction is a lipid X + a UDP-2-N,3-O-bis[(3R)-3-hydroxyacyl]-alpha-D-glucosamine = a lipid A disaccharide + UDP + H(+). Its pathway is bacterial outer membrane biogenesis; LPS lipid A biosynthesis. In terms of biological role, condensation of UDP-2,3-diacylglucosamine and 2,3-diacylglucosamine-1-phosphate to form lipid A disaccharide, a precursor of lipid A, a phosphorylated glycolipid that anchors the lipopolysaccharide to the outer membrane of the cell. The protein is Lipid-A-disaccharide synthase of Chromohalobacter salexigens (strain ATCC BAA-138 / DSM 3043 / CIP 106854 / NCIMB 13768 / 1H11).